Reading from the N-terminus, the 542-residue chain is MAAKEVKFHSDAREKMLRGVNILADAVKVTLGPKGRNVVIDKSFGAPRITKDGVTVAKEIELEDKFENMGAQMVREVASKTSDLAGDGTTTATVLAQAIVKEGAKAVASGMNPMDLKRGIDKAVEAIVQELKTNARKVTRNDEIAQVGTISANGDAEIGRFLAEAMQKVGNEGVITVEEAKTAETELEVVEGMQFDRGYLSPYFITNQDKMRVELEEPYVLIHEKKLSNLQALLPVLEAVVQSSKPLLIIAEDVEGEALATLVVNKLRGGLKVAAVKAPGFGDRRKAMLEDIAILTGGTAISEDLGIKLENVTLEMLGRAKKVVIEKENTTIVDGAGSKDEIQGRVSQIKSQIEETTSDYDKEKLQERLAKLAGGVAVIRVGGSTEVEVKERKDRVDDAMHATRAAVEEGVLPGGGVALLRAAKALDSVQAENEDQKHGIEIVRRAIEAPVRQIAENAGAEGSIIVGKLREKPEFGWGWNAQTNAFGDLYNEGVIDPVKVVRTALQDAASVAGLLVTTEAMVAEKPKKEPAVPAMPAGGMDF.

ATP-binding positions include 30-33, Lys-51, 87-91, Gly-415, and Asp-496; these read TLGP and DGTTT.

This sequence belongs to the chaperonin (HSP60) family. As to quaternary structure, forms a cylinder of 14 subunits composed of two heptameric rings stacked back-to-back. Interacts with the co-chaperonin GroES.

The protein resides in the cytoplasm. It carries out the reaction ATP + H2O + a folded polypeptide = ADP + phosphate + an unfolded polypeptide.. Together with its co-chaperonin GroES, plays an essential role in assisting protein folding. The GroEL-GroES system forms a nano-cage that allows encapsulation of the non-native substrate proteins and provides a physical environment optimized to promote and accelerate protein folding. This chain is Chaperonin GroEL 2, found in Mesorhizobium japonicum (strain LMG 29417 / CECT 9101 / MAFF 303099) (Mesorhizobium loti (strain MAFF 303099)).